A 335-amino-acid chain; its full sequence is Phosphate acyltransferase (335 aa).

The protein belongs to the PlsX family. In terms of assembly, homodimer. Probably interacts with PlsY.

It is found in the cytoplasm. The enzyme catalyses a fatty acyl-[ACP] + phosphate = an acyl phosphate + holo-[ACP]. It functions in the pathway lipid metabolism; phospholipid metabolism. Its function is as follows. Catalyzes the reversible formation of acyl-phosphate (acyl-PO(4)) from acyl-[acyl-carrier-protein] (acyl-ACP). This enzyme utilizes acyl-ACP as fatty acyl donor, but not acyl-CoA. In Heliobacterium modesticaldum (strain ATCC 51547 / Ice1), this protein is Phosphate acyltransferase.